The sequence spans 362 residues: Phosphoserine aminotransferase (362 aa).

Position 43 (Arg43) interacts with L-glutamate. Pyridoxal 5'-phosphate is bound by residues 77-78 (AR), Trp103, Thr153, Asp173, and Gln196. Lys197 is subject to N6-(pyridoxal phosphate)lysine.

This sequence belongs to the class-V pyridoxal-phosphate-dependent aminotransferase family. SerC subfamily. In terms of assembly, homodimer. Requires pyridoxal 5'-phosphate as cofactor.

It is found in the cytoplasm. It carries out the reaction O-phospho-L-serine + 2-oxoglutarate = 3-phosphooxypyruvate + L-glutamate. The enzyme catalyses 4-(phosphooxy)-L-threonine + 2-oxoglutarate = (R)-3-hydroxy-2-oxo-4-phosphooxybutanoate + L-glutamate. It participates in amino-acid biosynthesis; L-serine biosynthesis; L-serine from 3-phospho-D-glycerate: step 2/3. Its pathway is cofactor biosynthesis; pyridoxine 5'-phosphate biosynthesis; pyridoxine 5'-phosphate from D-erythrose 4-phosphate: step 3/5. Its function is as follows. Catalyzes the reversible conversion of 3-phosphohydroxypyruvate to phosphoserine and of 3-hydroxy-2-oxo-4-phosphonooxybutanoate to phosphohydroxythreonine. This chain is Phosphoserine aminotransferase, found in Legionella pneumophila subsp. pneumophila (strain Philadelphia 1 / ATCC 33152 / DSM 7513).